The sequence spans 178 residues: Phosphopantetheine adenylyltransferase (178 aa).

Position 17 (Thr-17) interacts with substrate. ATP is bound by residues 17–18 (TF) and His-25. Substrate is bound by residues Lys-49, Leu-86, and Arg-100. ATP contacts are provided by residues 101 to 103 (GLR), Glu-111, and 136 to 142 (LQPVASR).

This sequence belongs to the bacterial CoaD family. Homohexamer. Mg(2+) serves as cofactor.

The protein resides in the cytoplasm. It carries out the reaction (R)-4'-phosphopantetheine + ATP + H(+) = 3'-dephospho-CoA + diphosphate. Its pathway is cofactor biosynthesis; coenzyme A biosynthesis; CoA from (R)-pantothenate: step 4/5. Its function is as follows. Reversibly transfers an adenylyl group from ATP to 4'-phosphopantetheine, yielding dephospho-CoA (dPCoA) and pyrophosphate. This chain is Phosphopantetheine adenylyltransferase, found in Zymomonas mobilis subsp. mobilis (strain ATCC 31821 / ZM4 / CP4).